We begin with the raw amino-acid sequence, 322 residues long: HPr kinase/phosphorylase (322 aa).

Catalysis depends on residues His-146 and Lys-167. 161-168 contacts ATP; it reads GDSGLGKS. Ser-168 is a binding site for Mg(2+). Asp-185 serves as the catalytic Proton acceptor; for phosphorylation activity. Proton donor; for dephosphorylation activity. The segment at 209 to 218 is important for the catalytic mechanism of both phosphorylation and dephosphorylation; that stretch reads LEVRGLGLLD. Position 210 (Glu-210) interacts with Mg(2+). The active site involves Arg-250. Residues 271–276 are important for the catalytic mechanism of dephosphorylation; it reads QVAAGR.

The protein belongs to the HPrK/P family. In terms of assembly, homohexamer. Mg(2+) is required as a cofactor.

It catalyses the reaction [HPr protein]-L-serine + ATP = [HPr protein]-O-phospho-L-serine + ADP + H(+). The catalysed reaction is [HPr protein]-O-phospho-L-serine + phosphate + H(+) = [HPr protein]-L-serine + diphosphate. In terms of biological role, catalyzes the ATP- as well as the pyrophosphate-dependent phosphorylation of a specific serine residue in HPr, a phosphocarrier protein of the phosphoenolpyruvate-dependent sugar phosphotransferase system (PTS). HprK/P also catalyzes the pyrophosphate-producing, inorganic phosphate-dependent dephosphorylation (phosphorolysis) of seryl-phosphorylated HPr (P-Ser-HPr). This is HPr kinase/phosphorylase from Paraburkholderia phytofirmans (strain DSM 17436 / LMG 22146 / PsJN) (Burkholderia phytofirmans).